Here is a 115-residue protein sequence, read N- to C-terminus: U3-lycotoxin-Ls1a (115 aa).

The N-terminal stretch at 1-20 is a signal peptide; that stretch reads MKFVLLFGVLLVTLFSYSSA. Positions 21-44 are excised as a propeptide; that stretch reads EMLDDFDQADEDELLSSIEKEEAR. 4 disulfide bridges follow: Cys-48/Cys-63, Cys-55/Cys-72, Cys-62/Cys-87, and Cys-74/Cys-85.

Belongs to the neurotoxin 19 (CSTX) family. 01 subfamily. Expressed by the venom gland.

Its subcellular location is the secreted. The polypeptide is U3-lycotoxin-Ls1a (Lycosa singoriensis (Wolf spider)).